The primary structure comprises 93 residues: uncharacterized protein (93 aa).

Positions 1–76 (MDSHTTEKRR…IQTIEPDESM (76 aa)) constitute a Sm domain.

In terms of assembly, part of the core SMN complex at least composed of smn1, yip11/gem2, gem6, gem7 and gem8. Interacts with gem7; the interaction is direct.

Functionally, the SMN complex catalyzes the assembly of small nuclear ribonucleoproteins (snRNPs), the building blocks of the spliceosome, and thereby plays an important role in the splicing of cellular pre-mRNAs. Most spliceosomal snRNPs contain a common set of Sm proteins smb1, smd1, smd2, smd3, sme1, smf1 and smg1 that assemble in a heptameric protein ring on the Sm site of the small nuclear RNA to form the core snRNP (Sm core). In the cytosol, the Sm proteins smd1, smd2, sme1, smf1 and smg1 (5Sm) are trapped in an inactive 6S pICln-Sm complex by the chaperone saf5. To complete assembly of core snRNPs, the SMN complex accepts 5Sm from saf5. Binding of snRNA inside 5Sm triggers eviction of the SMN complex, thereby allowing binding of smd3 and smb1 to complete assembly of the core snRNP. This is an uncharacterized protein from Schizosaccharomyces pombe (strain 972 / ATCC 24843) (Fission yeast).